The primary structure comprises 76 residues: MHFAQRVRALVVLNGVALLPQFACKQGLANGELVRLFAPWSGIPRPLYALFAGRKGMPAIARYFMDELTTRLANGV.

The protein to K.pneumoniae LtrA, E.coli YjiE, and YhcS.

This is an uncharacterized protein from Escherichia coli O6:H1 (strain CFT073 / ATCC 700928 / UPEC).